We begin with the raw amino-acid sequence, 703 residues long: DNA ligase (703 aa).

NAD(+) contacts are provided by residues 54–58 (DAEYD), 103–104 (SL), and E132. K134 acts as the N6-AMP-lysine intermediate in catalysis. The NAD(+) site is built by R155, E192, K308, and K332. Residues C426, C429, C444, and C450 each contribute to the Zn(2+) site. The region spanning 608 to 698 (EGPGPLDGVV…ADAARALAVP (91 aa)) is the BRCT domain.

Belongs to the NAD-dependent DNA ligase family. LigA subfamily. Mg(2+) is required as a cofactor. The cofactor is Mn(2+).

The catalysed reaction is NAD(+) + (deoxyribonucleotide)n-3'-hydroxyl + 5'-phospho-(deoxyribonucleotide)m = (deoxyribonucleotide)n+m + AMP + beta-nicotinamide D-nucleotide.. Its function is as follows. DNA ligase that catalyzes the formation of phosphodiester linkages between 5'-phosphoryl and 3'-hydroxyl groups in double-stranded DNA using NAD as a coenzyme and as the energy source for the reaction. It is essential for DNA replication and repair of damaged DNA. The protein is DNA ligase of Parafrankia sp. (strain EAN1pec).